We begin with the raw amino-acid sequence, 1231 residues long: Alpha-protein kinase 1 (1231 aa).

Residues F61, Q67, R116, 150 to 153 (RQAR), D231, K233, 236 to 237 (ST), and F295 each bind ADP-D-glycero-beta-D-manno-heptose. Disordered stretches follow at residues 508-540 (ERVS…RSWT), 609-637 (GSGQ…SSRA), 692-739 (GSNN…GDVP), 767-791 (TFAP…SPSQ), 811-843 (PDGS…DEEG), and 859-888 (AHRP…PIFD). Over residues 509 to 522 (RVSSQDSRSTASSK) the composition is skewed to polar residues. Residues 524–537 (SKKDQGKLQRERGR) are compositionally biased toward basic and acidic residues. A compositionally biased stretch (low complexity) spans 700-714 (SSHSCGSDSWSLSSS). Residues 775-784 (PEGETAESTD) show a composition bias toward acidic residues. Residues 1003–1223 (KYSKKSELWT…ICHRLSLTRP (221 aa)) enclose the Alpha-type protein kinase domain.

Belongs to the protein kinase superfamily. Alpha-type protein kinase family. ALPK subfamily. In terms of tissue distribution, widely expressed. Expressed in the retina and in sweat glands, especially in the myoepithelial cells.

The protein resides in the cytoplasm. It is found in the cytosol. Its subcellular location is the cytoskeleton. It localises to the spindle pole. The protein localises to the microtubule organizing center. The protein resides in the centrosome. It is found in the cell projection. Its subcellular location is the cilium. The catalysed reaction is L-seryl-[protein] + ATP = O-phospho-L-seryl-[protein] + ADP + H(+). It carries out the reaction L-threonyl-[protein] + ATP = O-phospho-L-threonyl-[protein] + ADP + H(+). Its activity is regulated as follows. Serine/threonine-protein kinase activity is stimulated upon ADP-D-glycero-beta-D-manno-heptose (ADP-Heptose)-binding. In terms of biological role, serine/threonine-protein kinase that detects bacterial pathogen-associated molecular pattern metabolites (PAMPs) and initiates an innate immune response, a critical step for pathogen elimination and engagement of adaptive immunity. Specifically recognizes and binds ADP-D-glycero-beta-D-manno-heptose (ADP-Heptose), a potent PAMP present in all Gram-negative and some Gram-positive bacteria. ADP-Heptose-binding stimulates its kinase activity to phosphorylate and activate TIFA, triggering pro-inflammatory NF-kappa-B signaling. May be involved in monosodium urate monohydrate (MSU)-induced inflammation by mediating phosphorylation of unconventional myosin MYO9A. May also play a role in apical protein transport by mediating phosphorylation of unconventional myosin MYO1A. May play a role in ciliogenesis. The protein is Alpha-protein kinase 1 of Mus musculus (Mouse).